Here is a 90-residue protein sequence, read N- to C-terminus: Probable Fe(2+)-trafficking protein (90 aa).

Belongs to the Fe(2+)-trafficking protein family.

Could be a mediator in iron transactions between iron acquisition and iron-requiring processes, such as synthesis and/or repair of Fe-S clusters in biosynthetic enzymes. This chain is Probable Fe(2+)-trafficking protein, found in Marinobacter nauticus (strain ATCC 700491 / DSM 11845 / VT8) (Marinobacter aquaeolei).